Here is a 577-residue protein sequence, read N- to C-terminus: Phosphoethanolamine transferase CptA (577 aa).

5 helical membrane-spanning segments follow: residues 17-37 (LGWALLYFWFFSTLLQAIIYL), 45-65 (GLRDSLLYSSLWLIPVFLFPG), 69-89 (VIAAVIGVVLWAASLAALSYY), 119-139 (YFSLKIVLVALAYTVAAILLW), and 154-174 (LVSFALLYGLILHPIAMNTFI).

This sequence belongs to the phosphoethanolamine transferase family. EptC/CptA subfamily.

It localises to the cell inner membrane. The protein operates within bacterial outer membrane biogenesis; LPS core biosynthesis. Catalyzes the addition of a phosphoethanolamine moiety to the outer membrane lipopolysaccharide core. The protein is Phosphoethanolamine transferase CptA (cptA) of Salmonella typhimurium (strain LT2 / SGSC1412 / ATCC 700720).